A 195-amino-acid polypeptide reads, in one-letter code: 2-cysteine peroxiredoxin, chloroplastic (195 aa).

One can recognise a Thioredoxin domain in the interval 3–161 (IRVGQKAPDF…ALRTLQAIQY (159 aa)). Catalysis depends on cysteine 49, which acts as the Cysteine sulfenic acid (-SOH) intermediate.

This sequence belongs to the peroxiredoxin family. AhpC/Prx1 subfamily. As to quaternary structure, homodimer; disulfide-linked, upon oxidation.

It localises to the plastid. The protein resides in the chloroplast. It catalyses the reaction a hydroperoxide + [thioredoxin]-dithiol = an alcohol + [thioredoxin]-disulfide + H2O. In terms of biological role, thiol-specific peroxidase that catalyzes the reduction of hydrogen peroxide and organic hydroperoxides to water and alcohols, respectively. Plays a role in cell protection against oxidative stress by detoxifying peroxides. The chain is 2-cysteine peroxiredoxin, chloroplastic from Chattonella marina var. antiqua (Red tide flagellate).